The following is an 85-amino-acid chain: U4-theraphotoxin-Hhn1ad (85 aa).

The signal sequence occupies residues Met-1–Ala-22. Residues Glu-23–Arg-48 constitute a propeptide that is removed on maturation. 3 disulfide bridges follow: Cys-52–Cys-66, Cys-56–Cys-77, and Cys-71–Cys-82.

This sequence belongs to the neurotoxin 12 (Hwtx-2) family. 02 (Hwtx-2) subfamily. In terms of tissue distribution, expressed by the venom gland.

It is found in the secreted. In terms of biological role, postsynaptic neurotoxin. This Cyriopagopus hainanus (Chinese bird spider) protein is U4-theraphotoxin-Hhn1ad.